A 322-amino-acid chain; its full sequence is Thiamine thiazole synthase (322 aa).

Substrate is bound by residues cysteine 84, 105–106 (EA), glycine 113, and valine 178. Cysteine 211 bears the 2,3-didehydroalanine (Cys) mark. Residues aspartate 213, histidine 228, methionine 280, and 290-292 (RMG) each bind substrate.

This sequence belongs to the THI4 family. In terms of assembly, homooctamer. It depends on Fe cation as a cofactor. In terms of processing, during the catalytic reaction, a sulfide is transferred from Cys-211 to a reaction intermediate, generating a dehydroalanine residue.

It localises to the cytoplasm. Its subcellular location is the nucleus. The catalysed reaction is [ADP-thiazole synthase]-L-cysteine + glycine + NAD(+) = [ADP-thiazole synthase]-dehydroalanine + ADP-5-ethyl-4-methylthiazole-2-carboxylate + nicotinamide + 3 H2O + 2 H(+). Functionally, involved in biosynthesis of the thiamine precursor thiazole. Catalyzes the conversion of NAD and glycine to adenosine diphosphate 5-(2-hydroxyethyl)-4-methylthiazole-2-carboxylic acid (ADT), an adenylated thiazole intermediate. The reaction includes an iron-dependent sulfide transfer from a conserved cysteine residue of the protein to a thiazole intermediate. The enzyme can only undergo a single turnover, which suggests it is a suicide enzyme. May have additional roles in adaptation to various stress conditions and in DNA damage tolerance. This is Thiamine thiazole synthase from Fusarium vanettenii (strain ATCC MYA-4622 / CBS 123669 / FGSC 9596 / NRRL 45880 / 77-13-4) (Fusarium solani subsp. pisi).